The sequence spans 117 residues: Immunoglobulin heavy variable 4-4 (117 aa).

A signal peptide spans 1–19 (MKHLWFFLLLVAAPRWVLS). Residues 20–44 (QVQLQESGPGLVKPSGTLSLTCAVS) form a framework-1 region. Positions 20–117 (QVQLQESGPG…ADTAVYYCAR (98 aa)) constitute an Ig-like domain. A disulfide bridge connects residues cysteine 41 and cysteine 115. A complementarity-determining-1 region spans residues 45–53 (GGSISSSNW). Positions 54 to 70 (WSWVRQPPGKGLEWIGE) are framework-2. A complementarity-determining-2 region spans residues 71–77 (IYHSGST). The segment at 78–115 (NYNPSLKSRVTISVDKSKNQFSLKLSSVTAADTAVYYC) is framework-3. Residues 116–117 (AR) are complementarity-determining-3.

In terms of assembly, immunoglobulins are composed of two identical heavy chains and two identical light chains; disulfide-linked.

Its subcellular location is the secreted. It is found in the cell membrane. V region of the variable domain of immunoglobulin heavy chains that participates in the antigen recognition. Immunoglobulins, also known as antibodies, are membrane-bound or secreted glycoproteins produced by B lymphocytes. In the recognition phase of humoral immunity, the membrane-bound immunoglobulins serve as receptors which, upon binding of a specific antigen, trigger the clonal expansion and differentiation of B lymphocytes into immunoglobulins-secreting plasma cells. Secreted immunoglobulins mediate the effector phase of humoral immunity, which results in the elimination of bound antigens. The antigen binding site is formed by the variable domain of one heavy chain, together with that of its associated light chain. Thus, each immunoglobulin has two antigen binding sites with remarkable affinity for a particular antigen. The variable domains are assembled by a process called V-(D)-J rearrangement and can then be subjected to somatic hypermutations which, after exposure to antigen and selection, allow affinity maturation for a particular antigen. The polypeptide is Immunoglobulin heavy variable 4-4 (Homo sapiens (Human)).